The sequence spans 354 residues: Methylthioribose-1-phosphate isomerase (354 aa).

D246 (proton donor) is an active-site residue.

Belongs to the eIF-2B alpha/beta/delta subunits family. MtnA subfamily.

It localises to the cytoplasm. Its subcellular location is the nucleus. It catalyses the reaction 5-(methylsulfanyl)-alpha-D-ribose 1-phosphate = 5-(methylsulfanyl)-D-ribulose 1-phosphate. The protein operates within amino-acid biosynthesis; L-methionine biosynthesis via salvage pathway; L-methionine from S-methyl-5-thio-alpha-D-ribose 1-phosphate: step 1/6. Its function is as follows. Catalyzes the interconversion of methylthioribose-1-phosphate (MTR-1-P) into methylthioribulose-1-phosphate (MTRu-1-P). This Xenopus tropicalis (Western clawed frog) protein is Methylthioribose-1-phosphate isomerase (mri1).